The chain runs to 510 residues: L-2,4-diaminobutyrate decarboxylase (510 aa).

Lys-319 is subject to N6-(pyridoxal phosphate)lysine.

The protein belongs to the group II decarboxylase family. It depends on pyridoxal 5'-phosphate as a cofactor.

The catalysed reaction is L-2,4-diaminobutanoate + H(+) = propane-1,3-diamine + CO2. It functions in the pathway amine and polyamine biosynthesis; 1,3-diaminopropane biosynthesis; 1,3-diaminopropane from L-aspartate 4-semialdehyde: step 2/2. This chain is L-2,4-diaminobutyrate decarboxylase (ddc), found in Acinetobacter baumannii.